We begin with the raw amino-acid sequence, 34 residues long: Photosystem II reaction center protein M (34 aa).

Residues 5-25 (ILAFIATVLFILVPTAFLLII) traverse the membrane as a helical segment.

This sequence belongs to the PsbM family. In terms of assembly, PSII is composed of 1 copy each of membrane proteins PsbA, PsbB, PsbC, PsbD, PsbE, PsbF, PsbH, PsbI, PsbJ, PsbK, PsbL, PsbM, PsbT, PsbX, PsbY, PsbZ, Psb30/Ycf12, at least 3 peripheral proteins of the oxygen-evolving complex and a large number of cofactors. It forms dimeric complexes.

It is found in the plastid. The protein localises to the chloroplast thylakoid membrane. In terms of biological role, one of the components of the core complex of photosystem II (PSII). PSII is a light-driven water:plastoquinone oxidoreductase that uses light energy to abstract electrons from H(2)O, generating O(2) and a proton gradient subsequently used for ATP formation. It consists of a core antenna complex that captures photons, and an electron transfer chain that converts photonic excitation into a charge separation. This subunit is found at the monomer-monomer interface. In Piper cenocladum (Ant piper), this protein is Photosystem II reaction center protein M.